The sequence spans 378 residues: Chorismate synthase (378 aa).

Arg49 is an NADP(+) binding site. FMN-binding positions include 126–128, Gly287, 302–306, and Arg328; these read RAS and KPTAT.

The protein belongs to the chorismate synthase family. In terms of assembly, homotetramer. The cofactor is FMNH2.

It carries out the reaction 5-O-(1-carboxyvinyl)-3-phosphoshikimate = chorismate + phosphate. It functions in the pathway metabolic intermediate biosynthesis; chorismate biosynthesis; chorismate from D-erythrose 4-phosphate and phosphoenolpyruvate: step 7/7. In terms of biological role, catalyzes the anti-1,4-elimination of the C-3 phosphate and the C-6 proR hydrogen from 5-enolpyruvylshikimate-3-phosphate (EPSP) to yield chorismate, which is the branch point compound that serves as the starting substrate for the three terminal pathways of aromatic amino acid biosynthesis. This reaction introduces a second double bond into the aromatic ring system. The protein is Chorismate synthase of Synechococcus sp. (strain JA-3-3Ab) (Cyanobacteria bacterium Yellowstone A-Prime).